Reading from the N-terminus, the 28-residue chain is 3-phytase B (28 aa).

Residues 1-28 (RDPTGCEVDQVIMVKRHGERYPSPSAGK) are disordered. Residue H17 is the Nucleophile of the active site.

The protein belongs to the histidine acid phosphatase family.

The enzyme catalyses 1D-myo-inositol hexakisphosphate + H2O = 1D-myo-inositol 1,2,4,5,6-pentakisphosphate + phosphate. Its function is as follows. Catalyzes the hydrolysis of inorganic orthophosphate from phytate. This is 3-phytase B (phyB) from Aspergillus ficuum.